We begin with the raw amino-acid sequence, 109 residues long: MNECVNKLLHLKFLFYFILGIQKRPVFFVASRYGRSTTYDESLKSRRIFIVPRNEHFFLGSRYGKRSGKYLCLSREINKLIVRKRLRNNDKERTPTLSFITKHFLMRNT.

A signal peptide spans 1–22 (MNECVNKLLHLKFLFYFILGIQ). Tyrosine 33 is modified (tyrosine amide). Residues 36 to 53 (STTYDESLKSRRIFIVPR) constitute a propeptide that is removed on maturation. Tyrosine 63 is modified (tyrosine amide). A propeptide spanning residues 67 to 109 (SGKYLCLSREINKLIVRKRLRNNDKERTPTLSFITKHFLMRNT) is cleaved from the precursor.

The protein resides in the secreted. Its function is as follows. Neuropeptides RYamide-1 and RYamide-2 are ligands for the G-protein coupled receptor RYa-R. May suppress feeding behavior. In Drosophila melanogaster (Fruit fly), this protein is RYamide neuropeptides.